Here is a 307-residue protein sequence, read N- to C-terminus: Peroxisomal protein PEX21 (307 aa).

Residue Cys-4 forms a Glycyl cysteine thioester (Cys-Gly) (interchain with G-Cter in ubiquitin) linkage. The tract at residues 23-52 (VGRVGGFNRPSGGLGQSSAEQQLQARAGER) is disordered.

This sequence belongs to the peroxin-21 family. In terms of assembly, interacts with PEX7. Monoubiquitinated at Cys-4; acts as a signal for PEX21 extraction and is required for proper export from peroxisomes and recycling.

The protein localises to the cytoplasm. It is found in the cytosol. Its subcellular location is the peroxisome. Functionally, mediates peroxisomal import of proteins containing a C-terminal PTS2-type peroxisomal targeting signal via its interaction with PEX7. Interaction with PEX7 only takes place when PEX7 is associated with cargo proteins containing a PTS2 peroxisomal targeting signal. PEX7 along with PTS2-containing cargo proteins are then translocated through the PEX13-PEX14 docking complex together with PEX21. This chain is Peroxisomal protein PEX21 (PEX21), found in Eremothecium gossypii (strain ATCC 10895 / CBS 109.51 / FGSC 9923 / NRRL Y-1056) (Yeast).